The primary structure comprises 214 residues: tRNA (guanine-N(7)-)-methyltransferase (214 aa).

Glu-43, Glu-68, Asp-95, and Asp-117 together coordinate S-adenosyl-L-methionine. Asp-117 is a catalytic residue. Residues Lys-121, Asp-153, and 191-194 each bind substrate; that span reads TEYE.

It belongs to the class I-like SAM-binding methyltransferase superfamily. TrmB family.

It carries out the reaction guanosine(46) in tRNA + S-adenosyl-L-methionine = N(7)-methylguanosine(46) in tRNA + S-adenosyl-L-homocysteine. It functions in the pathway tRNA modification; N(7)-methylguanine-tRNA biosynthesis. Catalyzes the formation of N(7)-methylguanine at position 46 (m7G46) in tRNA. The polypeptide is tRNA (guanine-N(7)-)-methyltransferase (Brevibacillus brevis (strain 47 / JCM 6285 / NBRC 100599)).